The following is a 35-amino-acid chain: Photosystem II reaction center protein Psb30 (35 aa).

Residues 6–26 (VIVQLVFLALIITTGPVIIVY) form a helical membrane-spanning segment.

Belongs to the Psb30/Ycf12 family. As to quaternary structure, PSII is composed of 1 copy each of membrane proteins PsbA, PsbB, PsbC, PsbD, PsbE, PsbF, PsbH, PsbI, PsbJ, PsbK, PsbL, PsbM, PsbT, PsbY, PsbZ, Psb30/Ycf12, peripheral proteins of the oxygen-evolving complex and a large number of cofactors. It forms dimeric complexes.

It is found in the plastid. The protein resides in the chloroplast thylakoid membrane. In terms of biological role, a core subunit of photosystem II (PSII), probably helps stabilize the reaction center. The sequence is that of Photosystem II reaction center protein Psb30 from Cyanidium caldarium (Red alga).